Here is a 431-residue protein sequence, read N- to C-terminus: Aspartate--tRNA(Asp/Asn) ligase (431 aa).

Glu-170 lines the L-aspartate pocket. The segment at 192 to 195 (QLYK) is aspartate. Arg-214 contacts L-aspartate. Residues 214-216 (RAE), 222-224 (RHL), and Glu-354 each bind ATP. Residues Glu-354 and Ser-357 each contribute to the Mg(2+) site. Ser-357 and Arg-361 together coordinate L-aspartate. Residue 402-405 (GLER) coordinates ATP.

It belongs to the class-II aminoacyl-tRNA synthetase family. Type 2 subfamily. Homodimer. Mg(2+) is required as a cofactor.

The protein localises to the cytoplasm. It carries out the reaction tRNA(Asx) + L-aspartate + ATP = L-aspartyl-tRNA(Asx) + AMP + diphosphate. Its function is as follows. Aspartyl-tRNA synthetase with relaxed tRNA specificity since it is able to aspartylate not only its cognate tRNA(Asp) but also tRNA(Asn). Reaction proceeds in two steps: L-aspartate is first activated by ATP to form Asp-AMP and then transferred to the acceptor end of tRNA(Asp/Asn). The chain is Aspartate--tRNA(Asp/Asn) ligase from Methanopyrus kandleri (strain AV19 / DSM 6324 / JCM 9639 / NBRC 100938).